The sequence spans 943 residues: Translation initiation factor IF-2 (943 aa).

Disordered regions lie at residues 96-229 and 243-352; these read FIKR…ERRR and AAPK…QRQQ. Low complexity predominate over residues 104-116; it reads DAPSDAAESAPSA. Composition is skewed to basic and acidic residues over residues 120-163 and 171-229; these read ELVR…EERA and AEKK…ERRR. Low complexity predominate over residues 278 to 293; sequence ATGSGTGARAAAPSAP. The span at 313-323 shows a compositional bias: basic and acidic residues; the sequence is TTKKKEIKTRG. The 170-residue stretch at 443 to 612 folds into the tr-type G domain; the sequence is SRAPVVTVMG…LLQAEVLELK (170 aa). The G1 stretch occupies residues 452–459; it reads GHVDHGKT. 452–459 is a binding site for GTP; that stretch reads GHVDHGKT. Residues 477–481 form a G2 region; sequence GITQH. The tract at residues 498–501 is G3; the sequence is DTPG. GTP is bound by residues 498 to 502 and 552 to 555; these read DTPGH and TKAD. Residues 552–555 are G4; the sequence is TKAD. The segment at 588–590 is G5; sequence SSK.

The protein belongs to the TRAFAC class translation factor GTPase superfamily. Classic translation factor GTPase family. IF-2 subfamily.

Its subcellular location is the cytoplasm. In terms of biological role, one of the essential components for the initiation of protein synthesis. Protects formylmethionyl-tRNA from spontaneous hydrolysis and promotes its binding to the 30S ribosomal subunits. Also involved in the hydrolysis of GTP during the formation of the 70S ribosomal complex. In Acidovorax sp. (strain JS42), this protein is Translation initiation factor IF-2.